A 262-amino-acid polypeptide reads, in one-letter code: Matrix protein (262 aa).

Residues 219-243 are disordered; the sequence is PSPAEGKIGRIKRPTERKEDTPSMT.

The protein belongs to the nucleorhabdovirus type-1 matrix protein family. Homomultimer. Interacts with nucleoprotein and with the cytoplasmic domain of glycoprotein.

It localises to the virion membrane. The protein resides in the host endomembrane system. In terms of biological role, plays a major role in assembly and budding of virion. Completely covers the ribonucleoprotein coil and keep it in condensed bullet-shaped form. Inhibits viral transcription and stimulates replication. The protein is Matrix protein (M) of Rice yellow stunt virus (RYSV).